Here is a 180-residue protein sequence, read N- to C-terminus: Large ribosomal subunit protein uL6 (180 aa).

This sequence belongs to the universal ribosomal protein uL6 family. Part of the 50S ribosomal subunit.

Its function is as follows. This protein binds to the 23S rRNA, and is important in its secondary structure. It is located near the subunit interface in the base of the L7/L12 stalk, and near the tRNA binding site of the peptidyltransferase center. This is Large ribosomal subunit protein uL6 from Clostridium botulinum (strain Eklund 17B / Type B).